The following is a 257-amino-acid chain: MDPLIIKLGGVLLDNPQAMERLFQALLAYRHHDRRPIVIVHGGGCLVDELMVRLQLPVVKRQGLRVTPADQIGIISGALAGTANKTLQACAIAHGLAAIGLSLADGGAVQVSPLDASLGHVGQALPGSPLLLRQLLAADFLPIVSSIGISADGMLLNVNADQAATALAATLGADLLMLSDVSGILDGKGQRIAEMTAQKAQRLIEQGIITDGMVVKVNAALEAARTLGRPVDIAGWRHAEKLPALFNGEAVGTRIHA.

Residues glycine 43 to glycine 44, arginine 65, and asparagine 157 contribute to the substrate site. ATP is bound by residues aspartate 180–leucine 185 and isoleucine 208–threonine 210.

It belongs to the acetylglutamate kinase family. ArgB subfamily. Homodimer.

It localises to the cytoplasm. The catalysed reaction is N-acetyl-L-glutamate + ATP = N-acetyl-L-glutamyl 5-phosphate + ADP. The protein operates within amino-acid biosynthesis; L-arginine biosynthesis; N(2)-acetyl-L-ornithine from L-glutamate: step 2/4. Catalyzes the ATP-dependent phosphorylation of N-acetyl-L-glutamate. This Edwardsiella ictaluri (strain 93-146) protein is Acetylglutamate kinase.